The primary structure comprises 79 residues: MGNIYTKDIKRIVKEIYDRYKDEIKDDYNTNKQIVIRYVDVKSKKVRNRIAGYLTRYYKIMKEKETSPAEEKEEISEEI.

This sequence belongs to the eukaryotic ribosomal protein eS17 family.

This is Small ribosomal subunit protein eS17 from Saccharolobus solfataricus (strain ATCC 35092 / DSM 1617 / JCM 11322 / P2) (Sulfolobus solfataricus).